A 213-amino-acid chain; its full sequence is Adenylate kinase (213 aa).

G10–T15 provides a ligand contact to ATP. Positions S30 to V59 are NMP. Residues T31, R36, A57 to V59, G85 to R88, and Q92 each bind AMP. The interval G126–D163 is LID. Position 127 (R127) interacts with ATP. Zn(2+) is bound by residues C130, C133, C150, and C153. Positions 160 and 171 each coordinate AMP. An ATP-binding site is contributed by G199.

Belongs to the adenylate kinase family. As to quaternary structure, monomer.

The protein localises to the cytoplasm. The enzyme catalyses AMP + ATP = 2 ADP. It functions in the pathway purine metabolism; AMP biosynthesis via salvage pathway; AMP from ADP: step 1/1. Functionally, catalyzes the reversible transfer of the terminal phosphate group between ATP and AMP. Plays an important role in cellular energy homeostasis and in adenine nucleotide metabolism. In Syntrophobacter fumaroxidans (strain DSM 10017 / MPOB), this protein is Adenylate kinase.